We begin with the raw amino-acid sequence, 179 residues long: Large ribosomal subunit protein uL5 (179 aa).

This sequence belongs to the universal ribosomal protein uL5 family. In terms of assembly, part of the 50S ribosomal subunit; part of the 5S rRNA/L5/L18/L25 subcomplex. Contacts the 5S rRNA and the P site tRNA. Forms a bridge to the 30S subunit in the 70S ribosome.

Functionally, this is one of the proteins that bind and probably mediate the attachment of the 5S RNA into the large ribosomal subunit, where it forms part of the central protuberance. In the 70S ribosome it contacts protein S13 of the 30S subunit (bridge B1b), connecting the 2 subunits; this bridge is implicated in subunit movement. Contacts the P site tRNA; the 5S rRNA and some of its associated proteins might help stabilize positioning of ribosome-bound tRNAs. In Clostridium novyi (strain NT), this protein is Large ribosomal subunit protein uL5.